A 133-amino-acid polypeptide reads, in one-letter code: Small ribosomal subunit protein uS8 (133 aa).

Belongs to the universal ribosomal protein uS8 family. In terms of assembly, part of the 30S ribosomal subunit. Contacts proteins S5 and S12.

One of the primary rRNA binding proteins, it binds directly to 16S rRNA central domain where it helps coordinate assembly of the platform of the 30S subunit. This chain is Small ribosomal subunit protein uS8, found in Syntrophus aciditrophicus (strain SB).